Reading from the N-terminus, the 452-residue chain is Sesamin methylene transferase (452 aa).

This sequence belongs to the GcvT family. As to quaternary structure, homotrimer.

It carries out the reaction (+)-sesamin + (6S)-5,6,7,8-tetrahydrofolyl-(gamma-L-Glu)(n) = (+)-sesamin monocatechol + (6R)-5,10-methylenetetrahydrofolyl-(gamma-L-Glu)(n). The catalysed reaction is (+)-sesamin monocatechol + (6S)-5,6,7,8-tetrahydrofolyl-(gamma-L-Glu)(n) = (+)-sesamin dicatechol + (6R)-5,10-methylenetetrahydrofolyl-(gamma-L-Glu)(n). Its function is as follows. Converts sesamin into sesamin mono- and di-catechol. Catalyzes a ring cleavage to transfer the methylene group to tetrahydrofolate (THF). Also active with (+)-episesamin, (-)-asarinin, sesaminol, (+)-sesamolin and piperine. This chain is Sesamin methylene transferase, found in Sinomonas sp. (strain No.22).